Here is a 496-residue protein sequence, read N- to C-terminus: uncharacterized protein (496 aa).

A run of 13 helical transmembrane segments spans residues 5 to 25 (LTAL…GFLA), 45 to 65 (FGGL…YTFL), 77 to 97 (VAFF…FFLP), 127 to 147 (LVAI…LSGI), 161 to 181 (VKFV…FSGI), 193 to 213 (ILVW…HFNG), 239 to 259 (IPWF…WAHA), 278 to 298 (FLPL…IAFL), 325 to 345 (FAYA…AIGA), 374 to 394 (MVFV…TALV), 396 to 416 (LQLL…VSLF), 424 to 444 (ATVI…ITQS), and 450 to 470 (EGFW…PLFV).

Belongs to the sodium:solute symporter (SSF) (TC 2.A.21) family.

Its subcellular location is the cell membrane. This is an uncharacterized protein from Bacillus subtilis (strain 168).